The chain runs to 192 residues: Small ribosomal subunit protein uS5 (192 aa).

In terms of domain architecture, S5 DRBM spans Phe-20–Val-83. The disordered stretch occupies residues Ser-162–Ala-192.

It belongs to the universal ribosomal protein uS5 family. In terms of assembly, part of the 30S ribosomal subunit. Contacts proteins S4 and S8.

Functionally, with S4 and S12 plays an important role in translational accuracy. Its function is as follows. Located at the back of the 30S subunit body where it stabilizes the conformation of the head with respect to the body. The chain is Small ribosomal subunit protein uS5 from Methylorubrum populi (strain ATCC BAA-705 / NCIMB 13946 / BJ001) (Methylobacterium populi).